We begin with the raw amino-acid sequence, 427 residues long: Serine hydroxymethyltransferase (427 aa).

(6S)-5,6,7,8-tetrahydrofolate contacts are provided by residues Leu-122 and 126–128 (GHL). An N6-(pyridoxal phosphate)lysine modification is found at Lys-231. 355–357 (SPF) serves as a coordination point for (6S)-5,6,7,8-tetrahydrofolate.

Belongs to the SHMT family. Homodimer. Pyridoxal 5'-phosphate serves as cofactor.

Its subcellular location is the cytoplasm. The catalysed reaction is (6R)-5,10-methylene-5,6,7,8-tetrahydrofolate + glycine + H2O = (6S)-5,6,7,8-tetrahydrofolate + L-serine. The protein operates within one-carbon metabolism; tetrahydrofolate interconversion. It participates in amino-acid biosynthesis; glycine biosynthesis; glycine from L-serine: step 1/1. Catalyzes the reversible interconversion of serine and glycine with tetrahydrofolate (THF) serving as the one-carbon carrier. This reaction serves as the major source of one-carbon groups required for the biosynthesis of purines, thymidylate, methionine, and other important biomolecules. Also exhibits THF-independent aldolase activity toward beta-hydroxyamino acids, producing glycine and aldehydes, via a retro-aldol mechanism. The sequence is that of Serine hydroxymethyltransferase from Nostoc punctiforme (strain ATCC 29133 / PCC 73102).